A 1641-amino-acid polypeptide reads, in one-letter code: Lysine-specific demethylase 6B (1641 aa).

Disordered regions lie at residues 42 to 89 (LPGG…LHGK), 188 to 682 (YGAK…PLED), 704 to 808 (LDES…LLKS), and 824 to 1085 (GAAV…VSRA). Positions 214-223 (LSGPSGEEGL) are enriched in low complexity. S224 is modified (phosphoserine). The span at 242 to 268 (PGLPLPPPPPPPPPPPPPPPPPPPPLP) shows a compositional bias: pro residues. Over residues 293-309 (GPERKGSAPPERQEQRH) the composition is skewed to basic and acidic residues. The span at 312 to 326 (PHSYPYPAPAYSAHP) shows a compositional bias: low complexity. Residues 361–372 (DLRESRVQRSRM) are compositionally biased toward basic and acidic residues. A compositionally biased stretch (low complexity) spans 396-415 (PGTSSSSSSSSSSNNTGLRG). Residues 467–488 (PGTPSSPPPPCPRLLRPPPPPA) show a composition bias toward pro residues. The segment covering 552 to 568 (TTTSSSSSSNSHSSSPT) has biased composition (low complexity). 2 stretches are compositionally biased toward pro residues: residues 597 to 613 (QDPP…PAPP) and 645 to 660 (GPPP…PVPP). Basic and acidic residues predominate over residues 704 to 713 (LDESIRKEEE). Residues 743–766 (TAPATTTAAPTTATTTTTTTTTTT) show a composition bias toward low complexity. Pro residues predominate over residues 774–801 (PPALPPPPPLAKFPPPPQPQPPPPPPAS). Residues 855 to 879 (VAPSAQGSPKPSVSSSSQFSTSGGP) show a composition bias toward low complexity. A compositionally biased stretch (pro residues) spans 891–908 (APGPVTPAQLPPPLPLPP). Over residues 918–931 (EISRACETLVERVG) the composition is skewed to basic and acidic residues. Residues 974–987 (GKRRQKEHRRHRRA) are compositionally biased toward basic residues. Basic and acidic residues predominate over residues 988–1001 (CRDSVGRRPREGRA). Basic residues predominate over residues 1002–1014 (KAKAKAPKEKSRR). A compositionally biased stretch (pro residues) spans 1047–1066 (APAPPPAPAPAAQPTPPSAP). Residue K1107 forms a Glycyl lysine isopeptide (Lys-Gly) (interchain with G-Cter in SUMO2) linkage. The segment at 1286-1323 (FQESLQEERESEDEESEEPDSTTGTSPSSAPDPKNHHI) is disordered. Residues 1294–1305 (RESEDEESEEPD) are compositionally biased toward acidic residues. The segment covering 1306-1317 (STTGTSPSSAPD) has biased composition (low complexity). Residues 1337 to 1500 (RWKPQLQELL…YQLALERYEW (164 aa)) form the JmjC domain. 3 residues coordinate Fe cation: H1388, E1390, and H1468. Residues C1573, C1576, C1600, and C1603 each contribute to the Zn(2+) site.

This sequence belongs to the UTX family. Interacts with TLE1. Component of the MLL4 complex, at least composed of KMT2B/MLL4, ASH2L, RBBP5, WDR5, and KDM6B. Interacts with TBX21, SMARCA4, SMARCC1 and SMARCC2. L-ascorbate serves as cofactor. It depends on Fe(2+) as a cofactor.

It localises to the nucleus. It carries out the reaction N(6),N(6),N(6)-trimethyl-L-lysyl(27)-[histone H3] + 2 2-oxoglutarate + 2 O2 = N(6)-methyl-L-lysyl(27)-[histone H3] + 2 formaldehyde + 2 succinate + 2 CO2. Its function is as follows. Histone demethylase that specifically demethylates 'Lys-27' of histone H3, thereby playing a central role in histone code. Demethylates trimethylated and dimethylated H3 'Lys-27'. Plays a central role in regulation of posterior development, by regulating HOX gene expression. Involved in inflammatory response by participating in macrophage differentiation in case of inflammation by regulating gene expression and macrophage differentiation. Plays a demethylase-independent role in chromatin remodeling to regulate T-box family member-dependent gene expression by acting as a link between T-box factors and the SMARCA4-containing SWI/SNF remodeling complex. The chain is Lysine-specific demethylase 6B (Kdm6b) from Mus musculus (Mouse).